Consider the following 375-residue polypeptide: MPILDTPYASLDLIRQPEQPNEPLQAFDAADEYLLATLHGQGLPAATRVLILNDSFGALACALAAHVEVTSSGDSHLAHLALQKNLARNDLPADRVRFVPASEAAQGPFDRVLIRVPKTLSLLEEQLIRLHDQLAPGAQVIAAAMIKHLPRAAGDLLEQYIGPVQASLAVKKARLLSATPVDKPAPQSPYPTRYQLDQPKLELLNHANLFCREGLDIGTRAFLPHLPKALGAIRVADLGCGNGVLGIVYALGNPQAELTLVDESYMAVQSARENWQVILGERPADIRAGDGLAEQPPGSLDLVLCNPPFHQQQVVGDFLAWRMFTQAKAALTKGGELWIVGNRHLGYHLKLKRLFGNAEQVAATPKFVVLRSIKA.

The protein belongs to the methyltransferase superfamily. RlmG family.

Its subcellular location is the cytoplasm. It carries out the reaction guanosine(1835) in 23S rRNA + S-adenosyl-L-methionine = N(2)-methylguanosine(1835) in 23S rRNA + S-adenosyl-L-homocysteine + H(+). Its function is as follows. Specifically methylates the guanine in position 1835 (m2G1835) of 23S rRNA. In Stutzerimonas stutzeri (strain A1501) (Pseudomonas stutzeri), this protein is Ribosomal RNA large subunit methyltransferase G.